Reading from the N-terminus, the 1184-residue chain is Fibulin-2 (1184 aa).

The first 27 residues, 1–27, serve as a signal peptide directing secretion; it reads MVLLWEPAGAWLALGLALALGPSVAAA. The subdomain NA (Cys-rich) stretch occupies residues 28–177; sequence APRQDCTGVE…ELICYQLPGC (150 aa). A n region spans residues 28 to 444; sequence APRQDCTGVE…EGSTKDLIET (417 aa). The subdomain NB (Cys-free) stretch occupies residues 178–444; the sequence is HGNFSDAEEG…EGSTKDLIET (267 aa). N180 carries N-linked (GlcNAc...) asparagine glycosylation. Disordered regions lie at residues 221-293 and 399-437; these read VQAG…MAVT and IPPT…PEGS. Residues 224-236 are compositionally biased toward gly residues; sequence GAGGPPAALGGGS. Residues 252-261 are compositionally biased toward low complexity; sequence PRPTAAAALG. Residues 276-288 show a composition bias toward acidic residues; sequence DSEEEEEEEEERE. The residue at position 277 (S277) is a Phosphoserine. Residues 423-436 show a composition bias toward polar residues; that stretch reads PNSVHSIPRSSPEG. Cystine bridges form between C445-C472, C446-C479, C459-C480, C489-C518, C502-C519, C521-C545, C522-C552, C535-C553, C608-C620, C616-C629, C631-C644, C683-C693, C689-C702, C704-C717, C723-C736, C730-C745, C751-C762, C768-C781, C775-C790, C796-C808, C814-C827, C821-C836, C843-C856, C862-C875, C869-C884, C886-C899, C905-C917, C913-C926, C928-C941, C947-C956, C952-C965, C967-C980, C986-C998, C994-C1007, C1009-C1023, C1029-C1042, C1036-C1051, and C1056-C1068. Anaphylatoxin-like domains follow at residues 445–480, 488–519, and 521–553; these read CCAA…RHCC, SCMA…KQCC, and CCGL…LSCC. N507 carries N-linked (GlcNAc...) asparagine glycosylation. The 42-residue stretch at 604-645 folds into the EGF-like 1; calcium-binding domain; it reads DQDECLLLPGELCQHLCINTVGSYHCACFPGFSLQDDGRTCR. The EGF-like 2 domain occupies 679–718; sequence QPNTCKDNGPCKQVCSTVGGSAICSCFPGYAIMADGVSCE. The EGF-like 3; calcium-binding domain maps to 719-763; sequence DINECVTDLHTCSRGEHCVNTLGSFHCYKALTCEPGYALKDGECE. The 46-residue stretch at 764-809 folds into the EGF-like 4; calcium-binding domain; sequence DVDECAMGTHTCQPGFLCQNTKGSFYCQARQRCMDGFLQDPEGNCV. Residues 810-857 enclose the EGF-like 5; calcium-binding domain; the sequence is DINECTSLSEPCRPGFSCINTVGSYTCQRNPLICARGYHASDDGTKCV. The 43-residue stretch at 858-900 folds into the EGF-like 6; calcium-binding domain; that stretch reads DVNECETGVHRCGEGQVCHNLPGSYRCDCKAGFQRDAFGRGCI. In terms of domain architecture, EGF-like 7; calcium-binding spans 901-942; it reads DVNECWASPGRLCQHTCENTLGSYRCSCASGFLLAADGKRCE. The region spanning 943-981 is the EGF-like 8; calcium-binding domain; it reads DVNECEAQRCSQECANIYGSYQCYCRQGYQLAEDGHTCT. The EGF-like 9; calcium-binding domain maps to 982–1024; it reads DIDECAQGAGILCTFRCLNVPGSYQCACPEQGYTMTANGRSCK. In terms of domain architecture, EGF-like 10; calcium-binding spans 1025-1069; that stretch reads DVDECALGTHNCSEAETCHNIQGSFRCLRFECPPNYVQVSKTKCE. N-linked (GlcNAc...) asparagine glycosylation is present at N1035. A domain III region spans residues 1070–1184; the sequence is RTTCHDFLEC…MHIFFTTFAL (115 aa).

The protein belongs to the fibulin family. In terms of assembly, homotrimer; disulfide-linked. Interacts with LAMA2. Interacts with FBN1 (via N-terminal domain). Forms a ternary complex with ELN and FBN1. Post-translationally, O-glycosylated with core 1 or possibly core 8 glycans. It is unsure if the O-glycosylation is on Thr-347 or Ser-348. In terms of tissue distribution, component of both basement membranes and other connective tissues. Expressed in heart, placenta and ovary.

The protein localises to the secreted. Its subcellular location is the extracellular space. It is found in the extracellular matrix. Its binding to fibronectin and some other ligands is calcium dependent. May act as an adapter that mediates the interaction between FBN1 and ELN. The polypeptide is Fibulin-2 (FBLN2) (Homo sapiens (Human)).